The sequence spans 212 residues: Bcl-2-related ovarian killer protein (212 aa).

The residue at position 7 (serine 7) is a Phosphoserine. The interval 15 to 45 (MDAFDRSPTDKELVAQAKALGREYVHARLLR) is interactions with ITPR1. Residues lysine 25 and lysine 32 each participate in a glycyl lysine isopeptide (Lys-Gly) (interchain with G-Cter in ubiquitin) cross-link. Positions 32–44 (KALGREYVHARLL) match the BH4 motif. Residues 66–82 (VCAVLLRLGDELEMIRP) carry the BH3 motif. Positions 70–78 (LLRLGDELE) are nuclear export signal. The BH1 motif lies at 112-131 (HIFSAGITWGKVVSLYAVAA). Residues lysine 159 and lysine 176 each participate in a glycyl lysine isopeptide (Lys-Gly) (interchain with G-Cter in ubiquitin) cross-link. The short motif at 164–178 (WLRRRGGWTDVLKCV) is the BH2 element. Residues 189-209 (WLVAALCSFGRFLKAAFFVLL) traverse the membrane as a helical segment.

It belongs to the Bcl-2 family. As to quaternary structure, monomer; positively regulates apoptotic process. Homodimer. Heterodimer. Oligomer; promoted by apoptotic stimuli and BH3-only proteins; mediates constitutive activation. Interacts (via BH4 domain) with ITPR1; enhances BOK expression and stabilization; limits apoptosis and prevents ubiquitination and then degradation; protects ITPR1 from proteolysis by CASP3 during apoptosis. Interacts with ITPR2 and ITPR3; binds most strongly to ITPR2, and barely to ITPR3; regulates their expression. Interacts with XPO1; translocates to the cytoplasm. Interacts with BNIP3; promotes oligomerization. In terms of processing, ubiquitinated by AMFR/gp78 E3 ubiquitin ligase complex; mediates degradation by ubiquitin-proteasome pathway in a VCP/p97-dependent manner; prevents from pro-apoptotic activity; promotes degradation of newly synthesized proteins that are not ITPR1 associated. In terms of tissue distribution, expressed mainly in oocytes; weak expression in granulosa cells of the developing follicles. In adult human ovaries, expressed in granulosa cells at all follicular stages, but expression in primordial/primary follicles granulosa cell is stronger than in secondary and antral follicles.

The protein resides in the mitochondrion membrane. The protein localises to the endoplasmic reticulum membrane. Its subcellular location is the mitochondrion inner membrane. It localises to the cytoplasm. It is found in the nucleus. The protein resides in the mitochondrion. The protein localises to the endoplasmic reticulum. Its subcellular location is the mitochondrion outer membrane. It localises to the early endosome membrane. It is found in the recycling endosome membrane. The protein resides in the nucleus outer membrane. The protein localises to the golgi apparatus. Its subcellular location is the cis-Golgi network membrane. It localises to the trans-Golgi network membrane. It is found in the membrane. Functionally, apoptosis regulator that functions through different apoptotic signaling pathways. Plays a roles as pro-apoptotic protein that positively regulates intrinsic apoptotic process in a BAX- and BAK1-dependent manner or in a BAX- and BAK1-independent manner. In response to endoplasmic reticulum stress promotes mitochondrial apoptosis through downstream BAX/BAK1 activation and positive regulation of PERK-mediated unfolded protein response. Activates apoptosis independently of heterodimerization with survival-promoting BCL2 and BCL2L1 through induction of mitochondrial outer membrane permeabilization, in a BAX- and BAK1-independent manner, in response to inhibition of ERAD-proteasome degradation system, resulting in cytochrome c release. In response to DNA damage, mediates intrinsic apoptotic process in a TP53-dependent manner. Plays a role in granulosa cell apoptosis by CASP3 activation. Plays a roles as anti-apoptotic protein during neuronal apoptotic process, by negatively regulating poly ADP-ribose polymerase-dependent cell death through regulation of neuronal calcium homeostasis and mitochondrial bioenergetics in response to NMDA excitation. In addition to its role in apoptosis, may regulate trophoblast cell proliferation during the early stages of placental development, by acting on G1/S transition through regulation of CCNE1 expression. May also play a role as an inducer of autophagy by disrupting interaction between MCL1 and BECN1. Pro-apoptotic molecule exerting its function through the mitochondrial pathway. This chain is Bcl-2-related ovarian killer protein, found in Homo sapiens (Human).